Consider the following 684-residue polypeptide: Dipeptidyl-peptidase 5 (684 aa).

The N-terminal stretch at 1–24 (MNKKIFSMMAASIIGSAAMTPSAG) is a signal peptide. 3 WD repeats span residues 87 to 127 (DTES…TERR), 220 to 259 (KPWSGIEDFSWSPDGQNIAYASRKKTGMAYSLSTNSDIYI), and 323 to 363 (TFDY…GKIR). Active-site charge relay system residues include serine 542, aspartate 627, and histidine 659.

Belongs to the peptidase S9C family. As to quaternary structure, homodimer.

It is found in the periplasm. Functionally, catalyzes the removal of dipeptides from the N-terminus of oligopeptides. Prefers Ala and hydrophobic residues except Pro at the P1 position, and has no preference for P2 residues. Shows high dipeptidyl peptidase activity toward the synthetic substrates Lys-Ala-, Gly-Phe-, Met-Leu-, and Ser-Tyr-methylcoumaryl-7-amide (MCA), and slowly hydrolyzes Val-Tyr-MCA. Is likely involved in amino acid metabolism and bacterial growth of asaccharolytic P.gingivalis, that utilizes amino acids from extracellular proteinaceous nutrients as energy and carbon sources. The polypeptide is Dipeptidyl-peptidase 5 (Porphyromonas gingivalis (strain ATCC 33277 / DSM 20709 / CIP 103683 / JCM 12257 / NCTC 11834 / 2561)).